Here is a 303-residue protein sequence, read N- to C-terminus: Nucleotide-binding protein USA300HOU_0794 (303 aa).

18–25 is an ATP binding site; it reads GLSGAGKS. 69–72 contacts GTP; sequence DLRG.

The protein belongs to the RapZ-like family.

Displays ATPase and GTPase activities. The chain is Nucleotide-binding protein USA300HOU_0794 from Staphylococcus aureus (strain USA300 / TCH1516).